Reading from the N-terminus, the 599-residue chain is Elongation factor 4 (599 aa).

In terms of domain architecture, tr-type G spans 4-186; the sequence is DNIRNFSIIA…EIVNKIPPPR (183 aa). GTP is bound by residues 16 to 21 and 133 to 136; these read DHGKST and NKID.

Belongs to the TRAFAC class translation factor GTPase superfamily. Classic translation factor GTPase family. LepA subfamily.

It localises to the cell inner membrane. The catalysed reaction is GTP + H2O = GDP + phosphate + H(+). Its function is as follows. Required for accurate and efficient protein synthesis under certain stress conditions. May act as a fidelity factor of the translation reaction, by catalyzing a one-codon backward translocation of tRNAs on improperly translocated ribosomes. Back-translocation proceeds from a post-translocation (POST) complex to a pre-translocation (PRE) complex, thus giving elongation factor G a second chance to translocate the tRNAs correctly. Binds to ribosomes in a GTP-dependent manner. The protein is Elongation factor 4 of Geotalea daltonii (strain DSM 22248 / JCM 15807 / FRC-32) (Geobacter daltonii).